The following is a 365-amino-acid chain: DNA replication and repair protein RecF (365 aa).

30–37 (GQNGSGKT) is an ATP binding site.

Belongs to the RecF family.

The protein resides in the cytoplasm. Its function is as follows. The RecF protein is involved in DNA metabolism; it is required for DNA replication and normal SOS inducibility. RecF binds preferentially to single-stranded, linear DNA. It also seems to bind ATP. The sequence is that of DNA replication and repair protein RecF from Shewanella woodyi (strain ATCC 51908 / MS32).